The sequence spans 102 residues: Large ribosomal subunit protein bL21 (102 aa).

Belongs to the bacterial ribosomal protein bL21 family. As to quaternary structure, part of the 50S ribosomal subunit. Contacts protein L20.

Its function is as follows. This protein binds to 23S rRNA in the presence of protein L20. In Listeria monocytogenes serotype 4b (strain CLIP80459), this protein is Large ribosomal subunit protein bL21.